The primary structure comprises 212 residues: Uridine kinase (212 aa).

13–20 (GGSGSGKT) is an ATP binding site.

The protein belongs to the uridine kinase family.

It localises to the cytoplasm. It catalyses the reaction uridine + ATP = UMP + ADP + H(+). It carries out the reaction cytidine + ATP = CMP + ADP + H(+). It functions in the pathway pyrimidine metabolism; CTP biosynthesis via salvage pathway; CTP from cytidine: step 1/3. Its pathway is pyrimidine metabolism; UMP biosynthesis via salvage pathway; UMP from uridine: step 1/1. The sequence is that of Uridine kinase from Bacillus cereus (strain G9842).